The primary structure comprises 354 residues: 3-dehydroquinate synthase (354 aa).

Residues 69 to 74 (DGEAEK), 103 to 107 (GVIGD), 127 to 128 (TS), Lys140, and Lys149 contribute to the NAD(+) site. Residues Glu182, His245, and His262 each coordinate Zn(2+).

Belongs to the sugar phosphate cyclases superfamily. Dehydroquinate synthase family. Requires Co(2+) as cofactor. The cofactor is Zn(2+). NAD(+) is required as a cofactor.

The protein localises to the cytoplasm. It carries out the reaction 7-phospho-2-dehydro-3-deoxy-D-arabino-heptonate = 3-dehydroquinate + phosphate. It functions in the pathway metabolic intermediate biosynthesis; chorismate biosynthesis; chorismate from D-erythrose 4-phosphate and phosphoenolpyruvate: step 2/7. Catalyzes the conversion of 3-deoxy-D-arabino-heptulosonate 7-phosphate (DAHP) to dehydroquinate (DHQ). This chain is 3-dehydroquinate synthase, found in Colwellia psychrerythraea (strain 34H / ATCC BAA-681) (Vibrio psychroerythus).